The sequence spans 95 residues: Small ribosomal subunit protein bS16 (95 aa).

Belongs to the bacterial ribosomal protein bS16 family.

The chain is Small ribosomal subunit protein bS16 from Thermotoga maritima (strain ATCC 43589 / DSM 3109 / JCM 10099 / NBRC 100826 / MSB8).